The following is a 104-amino-acid chain: Small ribosomal subunit protein uS10 (104 aa).

This sequence belongs to the universal ribosomal protein uS10 family. Part of the 30S ribosomal subunit.

Its function is as follows. Involved in the binding of tRNA to the ribosomes. The chain is Small ribosomal subunit protein uS10 from Aquifex aeolicus (strain VF5).